The chain runs to 436 residues: Calcium/calmodulin-regulated receptor-like kinase 2 (436 aa).

A helical transmembrane segment spans residues 7 to 34; it reads LVVIGISVGLALGLLLALLLFFAIKWYY. The disordered stretch occupies residues 65-88; that stretch reads DRANTESSQPPENGAPTQHQPWWN. Over residues 69-88 the composition is skewed to polar residues; sequence TESSQPPENGAPTQHQPWWN. Residues 114 to 375 enclose the Protein kinase domain; it reads QNFTTVLGQG…PSIGEVTQFI (262 aa). ATP-binding positions include 120–128 and lysine 142; that span reads LGQGSFGPV. Tyrosine 187 is subject to Phosphotyrosine. Aspartate 239 serves as the catalytic Proton acceptor. At threonine 276 the chain carries Phosphothreonine. A Phosphotyrosine modification is found at tyrosine 284.

Belongs to the protein kinase superfamily. Ser/Thr protein kinase family.

The protein resides in the cell membrane. It catalyses the reaction L-seryl-[protein] + ATP = O-phospho-L-seryl-[protein] + ADP + H(+). The catalysed reaction is L-threonyl-[protein] + ATP = O-phospho-L-threonyl-[protein] + ADP + H(+). This is Calcium/calmodulin-regulated receptor-like kinase 2 from Arabidopsis thaliana (Mouse-ear cress).